The primary structure comprises 158 residues: Large ribosomal subunit protein uL16 (158 aa).

Residues 1-22 (MLSPKRTKYRKQQRGRMKGKAT) form a disordered region.

The protein belongs to the universal ribosomal protein uL16 family. Part of the 50S ribosomal subunit.

Binds 23S rRNA and is also seen to make contacts with the A and possibly P site tRNAs. The polypeptide is Large ribosomal subunit protein uL16 (Synechococcus sp. (strain JA-3-3Ab) (Cyanobacteria bacterium Yellowstone A-Prime)).